The chain runs to 226 residues: ATP synthase F(0) complex subunit a (226 aa).

Helical transmembrane passes span 12 to 32 (PTMMGLPIVILIVLFPSILFP), 68 to 88 (WALMLISLILFIGSTNLLGLL), 97 to 117 (QLSMNLGMAIPLWAGTVITGF), 138 to 158 (IPMLVIIETISLFIQPMALAV), 164 to 184 (ITAGHLLIHLIGGATLALMDI), and 189 to 209 (AFITFTILILLTILEFAVALI).

This sequence belongs to the ATPase A chain family. As to quaternary structure, component of the ATP synthase complex composed at least of ATP5F1A/subunit alpha, ATP5F1B/subunit beta, ATP5MC1/subunit c (homooctomer), MT-ATP6/subunit a, MT-ATP8/subunit 8, ATP5ME/subunit e, ATP5MF/subunit f, ATP5MG/subunit g, ATP5MK/subunit k, ATP5MJ/subunit j, ATP5F1C/subunit gamma, ATP5F1D/subunit delta, ATP5F1E/subunit epsilon, ATP5PF/subunit F6, ATP5PB/subunit b, ATP5PD/subunit d, ATP5PO/subunit OSCP. ATP synthase complex consists of a soluble F(1) head domain (subunits alpha(3) and beta(3)) - the catalytic core - and a membrane F(0) domain - the membrane proton channel (subunits c, a, 8, e, f, g, k and j). These two domains are linked by a central stalk (subunits gamma, delta, and epsilon) rotating inside the F1 region and a stationary peripheral stalk (subunits F6, b, d, and OSCP). Interacts with DNAJC30; interaction is direct.

Its subcellular location is the mitochondrion inner membrane. The catalysed reaction is H(+)(in) = H(+)(out). Functionally, subunit a, of the mitochondrial membrane ATP synthase complex (F(1)F(0) ATP synthase or Complex V) that produces ATP from ADP in the presence of a proton gradient across the membrane which is generated by electron transport complexes of the respiratory chain. ATP synthase complex consist of a soluble F(1) head domain - the catalytic core - and a membrane F(1) domain - the membrane proton channel. These two domains are linked by a central stalk rotating inside the F(1) region and a stationary peripheral stalk. During catalysis, ATP synthesis in the catalytic domain of F(1) is coupled via a rotary mechanism of the central stalk subunits to proton translocation. With the subunit c (ATP5MC1), forms the proton-conducting channel in the F(0) domain, that contains two crucial half-channels (inlet and outlet) that facilitate proton movement from the mitochondrial intermembrane space (IMS) into the matrix. Protons are taken up via the inlet half-channel and released through the outlet half-channel, following a Grotthuss mechanism. This chain is ATP synthase F(0) complex subunit a, found in Phoca vitulina (Harbor seal).